A 355-amino-acid chain; its full sequence is Elongation factor Ts (355 aa).

The segment at 82–85 is involved in Mg(2+) ion dislocation from EF-Tu; sequence TDFV.

Belongs to the EF-Ts family.

The protein resides in the cytoplasm. Its function is as follows. Associates with the EF-Tu.GDP complex and induces the exchange of GDP to GTP. It remains bound to the aminoacyl-tRNA.EF-Tu.GTP complex up to the GTP hydrolysis stage on the ribosome. The chain is Elongation factor Ts from Helicobacter acinonychis (strain Sheeba).